A 449-amino-acid polypeptide reads, in one-letter code: Doublesex- and mab-3-related transcription factor A2 (449 aa).

The segment at residues 57–104 (CARCRNHGVVSALKGHKRYCRWKDCMCAKCTLIAERQRVMAAQVALRR) is a DNA-binding region (DM). The tract at residues 163–259 (FPKTQLSGST…PSPSSAASRH (97 aa)) is disordered. The span at 166-187 (TQLSGSTTTQKSVGKPASTESD) shows a compositional bias: polar residues. The span at 230–240 (GSVSSLGSDSG) shows a compositional bias: low complexity. The region spanning 260–295 (MNAIDILTRVFPSHKRSVLELVLQGCGKDVVQAIEQ) is the DMA domain.

The protein belongs to the DMRT family. In terms of tissue distribution, expressed in brain and eye.

The protein resides in the nucleus. Its function is as follows. May be involved in sexual development. The sequence is that of Doublesex- and mab-3-related transcription factor A2 (dmrta2) from Xiphophorus maculatus (Southern platyfish).